The chain runs to 61 residues: Small ribosomal subunit protein uS14 (61 aa).

Residues Cys-24, Cys-27, Cys-40, and Cys-43 each coordinate Zn(2+).

Belongs to the universal ribosomal protein uS14 family. Zinc-binding uS14 subfamily. As to quaternary structure, part of the 30S ribosomal subunit. Contacts proteins S3 and S10. Zn(2+) serves as cofactor.

Binds 16S rRNA, required for the assembly of 30S particles and may also be responsible for determining the conformation of the 16S rRNA at the A site. The sequence is that of Small ribosomal subunit protein uS14 from Bifidobacterium adolescentis (strain ATCC 15703 / DSM 20083 / NCTC 11814 / E194a).